A 163-amino-acid chain; its full sequence is Crossover junction endodeoxyribonuclease RuvC (163 aa).

Residues Asp-7, Glu-67, and Asp-140 contribute to the active site. Positions 7, 67, and 140 each coordinate Mg(2+).

Belongs to the RuvC family. In terms of assembly, homodimer which binds Holliday junction (HJ) DNA. The HJ becomes 2-fold symmetrical on binding to RuvC with unstacked arms; it has a different conformation from HJ DNA in complex with RuvA. In the full resolvosome a probable DNA-RuvA(4)-RuvB(12)-RuvC(2) complex forms which resolves the HJ. Mg(2+) serves as cofactor.

The protein localises to the cytoplasm. It carries out the reaction Endonucleolytic cleavage at a junction such as a reciprocal single-stranded crossover between two homologous DNA duplexes (Holliday junction).. In terms of biological role, the RuvA-RuvB-RuvC complex processes Holliday junction (HJ) DNA during genetic recombination and DNA repair. Endonuclease that resolves HJ intermediates. Cleaves cruciform DNA by making single-stranded nicks across the HJ at symmetrical positions within the homologous arms, yielding a 5'-phosphate and a 3'-hydroxyl group; requires a central core of homology in the junction. The consensus cleavage sequence is 5'-(A/T)TT(C/G)-3'. Cleavage occurs on the 3'-side of the TT dinucleotide at the point of strand exchange. HJ branch migration catalyzed by RuvA-RuvB allows RuvC to scan DNA until it finds its consensus sequence, where it cleaves and resolves the cruciform DNA. In Desulforamulus reducens (strain ATCC BAA-1160 / DSM 100696 / MI-1) (Desulfotomaculum reducens), this protein is Crossover junction endodeoxyribonuclease RuvC.